The primary structure comprises 180 residues: Acireductone dioxygenase (180 aa).

Fe(2+) is bound by residues histidine 97, histidine 99, glutamate 103, and histidine 141. Ni(2+) is bound by residues histidine 97, histidine 99, glutamate 103, and histidine 141.

It belongs to the acireductone dioxygenase (ARD) family. In terms of assembly, monomer. It depends on Fe(2+) as a cofactor. The cofactor is Mg(2+). Requires Ni(2+) as cofactor. Mn(2+) serves as cofactor. Co(2+) is required as a cofactor.

The catalysed reaction is 1,2-dihydroxy-5-(methylsulfanyl)pent-1-en-3-one + O2 = 3-(methylsulfanyl)propanoate + CO + formate + 2 H(+). The enzyme catalyses 1,2-dihydroxy-5-(methylsulfanyl)pent-1-en-3-one + O2 = 4-methylsulfanyl-2-oxobutanoate + formate + 2 H(+). It functions in the pathway amino-acid biosynthesis; L-methionine biosynthesis via salvage pathway; L-methionine from S-methyl-5-thio-alpha-D-ribose 1-phosphate: step 5/6. Its function is as follows. Catalyzes 2 different reactions between oxygen and the acireductone 1,2-dihydroxy-3-keto-5-methylthiopentene (DHK-MTPene) depending upon the metal bound in the active site. Fe-containing acireductone dioxygenase (Fe-ARD) produces formate and 2-keto-4-methylthiobutyrate (KMTB), the alpha-ketoacid precursor of methionine in the methionine recycle pathway. Ni-containing acireductone dioxygenase (Ni-ARD) produces methylthiopropionate, carbon monoxide and formate, and does not lie on the methionine recycle pathway. This chain is Acireductone dioxygenase (mtnD), found in Klebsiella oxytoca.